We begin with the raw amino-acid sequence, 673 residues long: Paralemmin-3 (673 aa).

Coiled-coil stretches lie at residues 4–49 (SSLY…LRER) and 75–101 (GQAQ…LQSA). Disordered stretches follow at residues 49–78 (RWLM…GQAQ) and 99–213 (QSAS…GEAK). The segment covering 123–137 (LSQSIVEAGSVGQTD) has biased composition (polar residues). Phosphoserine occurs at positions 124 and 143. Phosphothreonine is present on Thr-151. A phosphoserine mark is found at Ser-155, Ser-157, and Ser-260. Disordered regions lie at residues 295–343 (VPEV…SFIW) and 356–673 (LLVE…CAVM). Phosphothreonine is present on Thr-301. Position 325 is a phosphoserine (Ser-325). Gly residues predominate over residues 327–338 (EGDGQGGSGGEE). A phosphoserine mark is found at Ser-375 and Ser-420. Composition is skewed to basic and acidic residues over residues 392–477 (EAEK…KRGA) and 487–532 (GVEK…EKTQ). Ser-544 and Ser-660 each carry phosphoserine. 2 S-palmitoyl cysteine lipidation sites follow: Cys-667 and Cys-669. Residue Cys-670 is modified to Cysteine methyl ester. A lipid anchor (S-farnesyl cysteine) is attached at Cys-670. A propeptide spans 671-673 (AVM) (removed in mature form).

It belongs to the paralemmin family. In terms of assembly, interacts with SIGIRR. In terms of processing, palmitoylated on Cys-667 and Cys-669 and prenylated on Cys-670; which is required for membrane association.

The protein resides in the cytoplasm. It is found in the cell membrane. In terms of biological role, ATP-binding protein, which may act as a adapter in the Toll-like receptor (TLR) signaling. This chain is Paralemmin-3 (PALM3), found in Homo sapiens (Human).